A 464-amino-acid chain; its full sequence is Glutamate--tRNA ligase (464 aa).

The short motif at 8 to 18 is the 'HIGH' region element; that stretch reads PSPTGYMHLGN. Residues Cys96, Cys98, Cys123, and His125 each coordinate Zn(2+). Positions 240–244 match the 'KMSKS' region motif; it reads KLSKR. Lys243 lines the ATP pocket.

Belongs to the class-I aminoacyl-tRNA synthetase family. Glutamate--tRNA ligase type 1 subfamily. Monomer. The cofactor is Zn(2+).

It is found in the cytoplasm. It catalyses the reaction tRNA(Glu) + L-glutamate + ATP = L-glutamyl-tRNA(Glu) + AMP + diphosphate. In terms of biological role, catalyzes the attachment of glutamate to tRNA(Glu) in a two-step reaction: glutamate is first activated by ATP to form Glu-AMP and then transferred to the acceptor end of tRNA(Glu). In Hydrogenobaculum sp. (strain Y04AAS1), this protein is Glutamate--tRNA ligase.